We begin with the raw amino-acid sequence, 67 residues long: DNA-directed RNA polymerase subunit omega (67 aa).

This sequence belongs to the RNA polymerase subunit omega family. As to quaternary structure, the RNAP catalytic core consists of 2 alpha, 1 beta, 1 beta' and 1 omega subunit. When a sigma factor is associated with the core the holoenzyme is formed, which can initiate transcription.

The catalysed reaction is RNA(n) + a ribonucleoside 5'-triphosphate = RNA(n+1) + diphosphate. Promotes RNA polymerase assembly. Latches the N- and C-terminal regions of the beta' subunit thereby facilitating its interaction with the beta and alpha subunits. The chain is DNA-directed RNA polymerase subunit omega from Paracidovorax citrulli (strain AAC00-1) (Acidovorax citrulli).